Here is a 465-residue protein sequence, read N- to C-terminus: Sensor histidine kinase ZraS (465 aa).

The Cytoplasmic segment spans residues 1–14 (MRFMQRSKDSLAKW). A helical membrane pass occupies residues 15–35 (LSAILPVVIVGLVGLFAVTVI). The Periplasmic portion of the chain corresponds to 36 to 201 (RDYGRASEAD…ATQSGEKRNT (166 aa)). Residues 202–222 (LIILFALATVLLASVLSFFWY) traverse the membrane as a helical segment. Residues 223-465 (RRYLRSRQLL…VNITRKDPQG (243 aa)) are Cytoplasmic-facing. The 208-residue stretch at 251–458 (GVAHEIRNPL…TFTLWLPVNI (208 aa)) folds into the Histidine kinase domain. Residue histidine 254 is modified to Phosphohistidine; by autocatalysis.

Post-translationally, autophosphorylated.

Its subcellular location is the cell inner membrane. It catalyses the reaction ATP + protein L-histidine = ADP + protein N-phospho-L-histidine.. With respect to regulation, activity of the ZraS/ZraR two-component system is repressed by the zinc-bound form of ZraP, which probably interacts with the periplasmic region of ZraS. In terms of biological role, part of the Zra signaling pathway, an envelope stress response (ESR) system composed of the periplasmic accessory protein ZraP, the histidine kinase ZraS and the transcriptional regulator ZraR. The ZraPSR system contributes to antibiotic resistance and is important for membrane integrity in the presence of membrane-targeting biocides. ZraS is a member of the two-component regulatory system ZraS/ZraR. Functions as a membrane-associated sensor kinase that phosphorylates ZraR in response to high concentrations of Zn(2+) or Pb(2+) in the medium. Binds one zinc molecule with high affinity via its periplasmic domain, inducing a conformational change that is transmitted to the histidine kinase domain and leads to the activation of ZraR. The system has no direct role in zinc or copper resistance. The sequence is that of Sensor histidine kinase ZraS from Escherichia coli (strain K12).